The sequence spans 530 residues: Arginine--tRNA ligase (530 aa).

A 'HIGH' region motif is present at residues alanine 113–histidine 123.

Belongs to the class-I aminoacyl-tRNA synthetase family. As to quaternary structure, monomer.

It is found in the cytoplasm. It catalyses the reaction tRNA(Arg) + L-arginine + ATP = L-arginyl-tRNA(Arg) + AMP + diphosphate. The sequence is that of Arginine--tRNA ligase from Campylobacter jejuni subsp. doylei (strain ATCC BAA-1458 / RM4099 / 269.97).